The chain runs to 424 residues: Histidine--tRNA ligase (424 aa).

It belongs to the class-II aminoacyl-tRNA synthetase family. In terms of assembly, homodimer.

The protein localises to the cytoplasm. It catalyses the reaction tRNA(His) + L-histidine + ATP = L-histidyl-tRNA(His) + AMP + diphosphate + H(+). The chain is Histidine--tRNA ligase from Thioalkalivibrio sulfidiphilus (strain HL-EbGR7).